Reading from the N-terminus, the 1357-residue chain is DNA-directed RNA polymerase subunit beta (1357 aa).

The protein belongs to the RNA polymerase beta chain family. In terms of assembly, the RNAP catalytic core consists of 2 alpha, 1 beta, 1 beta' and 1 omega subunit. When a sigma factor is associated with the core the holoenzyme is formed, which can initiate transcription.

The enzyme catalyses RNA(n) + a ribonucleoside 5'-triphosphate = RNA(n+1) + diphosphate. Its function is as follows. DNA-dependent RNA polymerase catalyzes the transcription of DNA into RNA using the four ribonucleoside triphosphates as substrates. The sequence is that of DNA-directed RNA polymerase subunit beta from Nitrosospira multiformis (strain ATCC 25196 / NCIMB 11849 / C 71).